The following is a 441-amino-acid chain: Xaa-Pro dipeptidase (441 aa).

The Mn(2+) site is built by Asp-244, Asp-255, His-336, Glu-381, and Glu-420.

Belongs to the peptidase M24B family. Bacterial-type prolidase subfamily. It depends on Mn(2+) as a cofactor.

It catalyses the reaction Xaa-L-Pro dipeptide + H2O = an L-alpha-amino acid + L-proline. Splits dipeptides with a prolyl residue in the C-terminal position. The sequence is that of Xaa-Pro dipeptidase from Xanthomonas euvesicatoria pv. vesicatoria (strain 85-10) (Xanthomonas campestris pv. vesicatoria).